The chain runs to 198 residues: 3-isopropylmalate dehydratase small subunit (198 aa).

This sequence belongs to the LeuD family. LeuD type 1 subfamily. Heterodimer of LeuC and LeuD.

It carries out the reaction (2R,3S)-3-isopropylmalate = (2S)-2-isopropylmalate. Its pathway is amino-acid biosynthesis; L-leucine biosynthesis; L-leucine from 3-methyl-2-oxobutanoate: step 2/4. Functionally, catalyzes the isomerization between 2-isopropylmalate and 3-isopropylmalate, via the formation of 2-isopropylmaleate. This chain is 3-isopropylmalate dehydratase small subunit, found in Mycobacterium avium (strain 104).